Here is a 653-residue protein sequence, read N- to C-terminus: Sodium-dependent phosphate transporter 2 (653 aa).

Residues 1-5 (MAIDG) lie on the Extracellular side of the membrane. The chain crosses the membrane as a helical span at residues 6 to 26 (YLWMVILGFIIAFILAFSVGA). Residues 27–46 (NDVANSFGTAVGSGVVTLRQ) are Cytoplasmic-facing. Residues 47–67 (ACILASIFETTGSVLLGAKVG) traverse the membrane as a helical segment. Over 68-86 (ETIRKGIIDVNLYNETVET) the chain is Extracellular. An N-linked (GlcNAc...) asparagine glycan is attached at N81. Residues 87 to 107 (LMAGEVSAMVGSAVWQLIASF) traverse the membrane as a helical segment. Residues 108–109 (LR) are Cytoplasmic-facing. Residues 110–130 (LPISGTHCIVGSTIGFSLVAI) form a helical membrane-spanning segment. Over 131-142 (GTQGVQWMELVK) the chain is Extracellular. A helical transmembrane segment spans residues 143 to 163 (IVASWFISPLLSGFMSGVLFI). Over 164–190 (LIRIFILKKEDPVPNGLRALPVFYAAT) the chain is Cytoplasmic. Residues 191–211 (IAINVFSIMYTGAPVLGLVLP) traverse the membrane as a helical segment. Residues 212–213 (IW) lie on the Extracellular side of the membrane. Residues 214–234 (AIALISFGVALLFALFVWLFV) form a helical membrane-spanning segment. Topologically, residues 235 to 483 (CPWMRRKIAG…EEKEEKDTAE (249 aa)) are cytoplasmic. A phosphoserine mark is found at S253, S256, S259, and S268. Positions 275–311 (PGAKANDDSTVPLTGSAGEPSGTSEGTSVGNHPRASY) are disordered. The span at 295 to 304 (SGTSEGTSVG) shows a compositional bias: polar residues. S316 and S385 each carry phosphoserine. The disordered stretch occupies residues 459–478 (SELTDPDQPRDDPAEEEKEE). Residues 484 to 504 (VHLLFHFLQVLTACFGSFAHG) traverse the membrane as a helical segment. At 505–531 (GNDVSNAIGPLVALWLIYEQGAVLQEA) the chain is on the extracellular side. Residues 532–552 (VTPVWLLFYGGVGICTGLWVW) traverse the membrane as a helical segment. Over 553 to 572 (GRRVIQTMGKDLTPITPSSG) the chain is Cytoplasmic. A helical membrane pass occupies residues 573-587 (FTIELASAFTVVIAS). The Extracellular portion of the chain corresponds to 588-594 (NVGLPVS). A helical transmembrane segment spans residues 595-610 (TTHCKVGSVVAVGWIR). Over 611–622 (SRKAVDWRLFRN) the chain is Cytoplasmic. The helical transmembrane segment at 623–643 (IFVAWFVTVPVAGLFSAAIMA) threads the bilayer. Residues 644 to 653 (LLMYGILPYV) lie on the Extracellular side of the membrane.

This sequence belongs to the inorganic phosphate transporter (PiT) (TC 2.A.20) family. In terms of assembly, homodimer.

The protein localises to the cell membrane. It is found in the apical cell membrane. The catalysed reaction is 2 Na(+)(out) + phosphate(out) = 2 Na(+)(in) + phosphate(in). Functionally, sodium-phosphate symporter which preferentially transports the monovalent form of phosphate with a stoichiometry of two sodium ions per phosphate ion. Plays a critical role in the determination of bone quality and strength by providing phosphate for bone mineralization. Required to maintain normal cerebrospinal fluid phosphate levels. Mediates phosphate-induced calcification of vascular smooth muscle cells (VCMCs) and can functionally compensate for loss of SLC20A1 in VCMCs. (Microbial infection) Functions as a retroviral receptor for feline leukemia virus subgroup B (FeLV-B). The polypeptide is Sodium-dependent phosphate transporter 2 (SLC20A2) (Felis catus (Cat)).